Here is a 92-residue protein sequence, read N- to C-terminus: MNFFAMQKSSLLPDTPYTVQSLQIVDYFIRIVYTVRYAPNILLHYQLFCITKKFIFAWQVPPPLLSYQSCSTDKQYKYSCRSTRKHSSSLTA.

Acts as a transactivator of AC102 and HE65 genes. Therefore, participates in the global recruitment of G-actin to the host nucleus. This chain is Protein AC152 (AC152), found in Autographa californica nuclear polyhedrosis virus (AcMNPV).